The primary structure comprises 260 residues: MSHHWGYGKHNGPEHWHKDFPIANGERQSPIDIDTNAAKHDPSLKPLRVCYEHPISRRIINNGHSFNVEFDDSHDKTVLKEGPLEGTYRLIQFHFHWGSSDGQGSEHTVNKKKYAAELHLVHWNTKYGDFGKAVKHPDGLAVLGIFLKIGSATPGLQKVVDTLSSIKTKGKSVDFTDFDPRGLLPESLDYWTYPGSLTTPPLLECVTWIVLKEPITVSSEQMLKFRNLNFNKEAEPEEPMVDNWRPTQPLKGRQVKASFV.

At Ser-2 the chain carries N-acetylserine. Residue Ser-2 is modified to Phosphoserine. Residues 3–259 (HHWGYGKHNG…LKGRQVKASF (257 aa)) form the Alpha-carbonic anhydrase domain. Catalysis depends on His-64, which acts as the Proton donor/acceptor. Residues His-94, His-96, and His-119 each coordinate Zn(2+). Phosphoserine occurs at positions 165 and 172. 198–199 (TT) is a binding site for substrate.

Belongs to the alpha-carbonic anhydrase family. Interacts with SLC4A4 and SLC26A6. Interaction with SLC4A7 regulates SLC4A7 transporter activity. Requires Zn(2+) as cofactor.

The protein localises to the cytoplasm. The protein resides in the cell membrane. The enzyme catalyses hydrogencarbonate + H(+) = CO2 + H2O. It carries out the reaction urea = cyanamide + H2O. With respect to regulation, inhibited by acetazolamide. In terms of biological role, catalyzes the reversible hydration of carbon dioxide. Can also hydrate cyanamide to urea. Involved in the regulation of fluid secretion into the anterior chamber of the eye. Essential for bone resorption and osteoclast differentiation. Contributes to intracellular pH regulation in the duodenal upper villous epithelium during proton-coupled peptide absorption. Stimulates the chloride-bicarbonate exchange activity of SLC26A6. This chain is Carbonic anhydrase 2 (CA2), found in Oryctolagus cuniculus (Rabbit).